Consider the following 216-residue polypeptide: Transmembrane emp24 domain-containing protein eca (216 aa).

The signal sequence occupies residues 1–20 (MRDQFISLALILCVLHSACG). The Lumenal portion of the chain corresponds to 21–182 (LYFHISETER…FRHTSESTNS (162 aa)). One can recognise a GOLD domain in the interval 30–126 (RKCFIEEVPD…QLRVHLDIQV (97 aa)). Positions 134–164 (AHVAQKEKLTELQLRIRQLLDQVEQITKEQN) form a coiled coil. Residues 183-203 (RVLWWSLAQTVVLVCMGFWQM) form a helical membrane-spanning segment. Over 204 to 216 (RHLKSFFEAKKLV) the chain is Cytoplasmic. The Prevents secretion from ER signature appears at 213 to 216 (KKLV).

This sequence belongs to the EMP24/GP25L family.

Its subcellular location is the endoplasmic reticulum membrane. Eca and bai are essential, though not redundant, for dorsoventral patterning of the embryo. Specifically required during early embryogenesis for the activity of maternal tkv, while the zygotic tkv is not affected. Involved in Golgi organization. This chain is Transmembrane emp24 domain-containing protein eca, found in Drosophila melanogaster (Fruit fly).